The primary structure comprises 100 residues: Osteocalcin (100 aa).

Positions 1-23 (MRALTLLALLALAALCIAGQAGA) are cleaved as a signal peptide. Positions 24–51 (KPSGAESSKGAAFVSKQEGSEVVKRPRR) are excised as a propeptide. The Gla domain occupies 52 to 98 (YLYQWLGAPVPYPDTLEPRREVCELNPDCDELADHIGFQEAYRRFYG). 4 residues coordinate Ca(2+): Glu68, Glu72, Glu75, and Asp81. Residues Glu68, Glu72, and Glu75 each carry the 4-carboxyglutamate modification. Cys74 and Cys80 are disulfide-bonded.

Belongs to the osteocalcin/matrix Gla protein family. Gamma-carboxyglutamate residues are formed by vitamin K dependent carboxylation by GGCX. These residues are essential for the binding of calcium. Decarboxylation promotes the hormone activity.

Its subcellular location is the secreted. Its function is as follows. The carboxylated form is one of the main organic components of the bone matrix, which constitutes 1-2% of the total bone protein: it acts as a negative regulator of bone formation and is required to limit bone formation without impairing bone resorption or mineralization. The carboxylated form binds strongly to apatite and calcium. Functionally, the uncarboxylated form acts as a hormone secreted by osteoblasts, which regulates different cellular processes, such as energy metabolism, male fertility and brain development. Regulates of energy metabolism by acting as a hormone favoring pancreatic beta-cell proliferation, insulin secretion and sensitivity and energy expenditure. Uncarboxylated osteocalcin hormone also promotes testosterone production in the testes: acts as a ligand for G protein-coupled receptor GPRC6A at the surface of Leydig cells, initiating a signaling response that promotes the expression of enzymes required for testosterone synthesis in a CREB-dependent manner. Also acts as a regulator of brain development: osteocalcin hormone crosses the blood-brain barrier and acts as a ligand for GPR158 on neurons, initiating a signaling response that prevents neuronal apoptosis in the hippocampus, favors the synthesis of all monoamine neurotransmitters and inhibits that of gamma-aminobutyric acid (GABA). Osteocalcin also crosses the placenta during pregnancy and maternal osteocalcin is required for fetal brain development. The polypeptide is Osteocalcin (Pan troglodytes (Chimpanzee)).